Consider the following 147-residue polypeptide: Large ribosomal subunit protein bL9 (147 aa).

The protein belongs to the bacterial ribosomal protein bL9 family.

Functionally, binds to the 23S rRNA. The sequence is that of Large ribosomal subunit protein bL9 from Citrifermentans bemidjiense (strain ATCC BAA-1014 / DSM 16622 / JCM 12645 / Bem) (Geobacter bemidjiensis).